A 399-amino-acid chain; its full sequence is 1-deoxy-D-xylulose 5-phosphate reductoisomerase (399 aa).

NADPH is bound by residues threonine 13, glycine 14, serine 15, isoleucine 16, and asparagine 127. Lysine 128 is a 1-deoxy-D-xylulose 5-phosphate binding site. Residue glutamate 129 coordinates NADPH. Aspartate 153 contacts Mn(2+). 1-deoxy-D-xylulose 5-phosphate-binding residues include serine 154, glutamate 155, serine 187, and histidine 210. Glutamate 155 is a Mn(2+) binding site. Glycine 216 lines the NADPH pocket. Positions 223, 228, 229, and 232 each coordinate 1-deoxy-D-xylulose 5-phosphate. Residue glutamate 232 coordinates Mn(2+).

Belongs to the DXR family. Mg(2+) is required as a cofactor. It depends on Mn(2+) as a cofactor.

It carries out the reaction 2-C-methyl-D-erythritol 4-phosphate + NADP(+) = 1-deoxy-D-xylulose 5-phosphate + NADPH + H(+). It functions in the pathway isoprenoid biosynthesis; isopentenyl diphosphate biosynthesis via DXP pathway; isopentenyl diphosphate from 1-deoxy-D-xylulose 5-phosphate: step 1/6. Functionally, catalyzes the NADPH-dependent rearrangement and reduction of 1-deoxy-D-xylulose-5-phosphate (DXP) to 2-C-methyl-D-erythritol 4-phosphate (MEP). The protein is 1-deoxy-D-xylulose 5-phosphate reductoisomerase of Bordetella petrii (strain ATCC BAA-461 / DSM 12804 / CCUG 43448).